The primary structure comprises 220 residues: Thiopurine S-methyltransferase (220 aa).

S-adenosyl-L-methionine-binding residues include W14, L49, E70, and R127.

It belongs to the class I-like SAM-binding methyltransferase superfamily. TPMT family.

The protein localises to the cytoplasm. It carries out the reaction S-adenosyl-L-methionine + a thiopurine = S-adenosyl-L-homocysteine + a thiopurine S-methylether.. The sequence is that of Thiopurine S-methyltransferase from Gluconobacter oxydans (strain 621H) (Gluconobacter suboxydans).